Consider the following 272-residue polypeptide: 2-amino-3,7-dideoxy-D-threo-hept-6-ulosonate synthase (272 aa).

The Proton acceptor role is filled by aspartate 33. 1-deoxy-D-threo-hexo-2,5-diulose 6-phosphate contacts are provided by residues 33-37 and 153-155; these read DHGVS and YPR. Tyrosine 153 acts as the Proton donor in catalysis. Lysine 184 serves as the catalytic Schiff-base intermediate with substrate. Residues 209–210 and 237–238 each bind 1-deoxy-D-threo-hexo-2,5-diulose 6-phosphate; these read GG and GR.

Belongs to the DeoC/FbaB aldolase family. ADHS subfamily. As to quaternary structure, homodecamer.

It catalyses the reaction 1-deoxy-D-threo-hexo-2,5-diulose 6-phosphate + L-aspartate 4-semialdehyde = 2,3-dioxopropyl phosphate + 2-amino-2,3,7-trideoxy-D-lyxo-hept-6-ulosonate. In terms of biological role, catalyzes a transaldol reaction between 6-deoxy-5-ketofructose 1-phosphate (DKFP) and L-aspartate semialdehyde (ASA) with an elimination of hydroxypyruvaldehyde phosphate to yield 2-amino-3,7-dideoxy-D-threo-hept-6-ulosonate (ADH). Plays a key role in an alternative pathway of the biosynthesis of 3-dehydroquinate (DHQ), which is involved in the canonical pathway for the biosynthesis of aromatic amino acids. The sequence is that of 2-amino-3,7-dideoxy-D-threo-hept-6-ulosonate synthase from Methanococcus maripaludis (strain C7 / ATCC BAA-1331).